The following is a 228-amino-acid chain: MTKRYFVTGTDTEVGKTVASCALLQAATQLGYQTVGYKPVASGSEMTTDGLRNSDALALQRNSSLPQPYSAINPYTFAEPTSPHIASADEGRAIDAAVLSRGLRTLEAQADWVLTEGAGGWFTPLSATLTFADWVQTEQLPVILVVGVKLGCINHAMLTALAVEQAGLPLVGWIANDMQPPGARHGEYLATLRRVIPAPLLGEIPWLGVSPSQAATGQYLDLSPLERA.

Position 13–18 (13–18 (EVGKTV)) interacts with ATP. Residue T17 participates in Mg(2+) binding. K38 is an active-site residue. S42 lines the substrate pocket. Residues D55, 116 to 119 (EGAG), 176 to 177 (ND), and 205 to 207 (PWL) each bind ATP. 2 residues coordinate Mg(2+): D55 and E116.

This sequence belongs to the dethiobiotin synthetase family. In terms of assembly, homodimer. Mg(2+) is required as a cofactor.

The protein resides in the cytoplasm. It catalyses the reaction (7R,8S)-7,8-diammoniononanoate + CO2 + ATP = (4R,5S)-dethiobiotin + ADP + phosphate + 3 H(+). Its pathway is cofactor biosynthesis; biotin biosynthesis; biotin from 7,8-diaminononanoate: step 1/2. Its function is as follows. Catalyzes a mechanistically unusual reaction, the ATP-dependent insertion of CO2 between the N7 and N8 nitrogen atoms of 7,8-diaminopelargonic acid (DAPA, also called 7,8-diammoniononanoate) to form a ureido ring. The chain is ATP-dependent dethiobiotin synthetase BioD 1 from Salmonella typhi.